The primary structure comprises 97 residues: Non-pathogenic pore-forming peptide amoebapore A (97 aa).

An N-terminal signal peptide occupies residues methionine 1–glutamine 20. In terms of domain architecture, Saposin B-type spans glycine 21–cysteine 97. Cystine bridges form between cysteine 25–cysteine 97, cysteine 28–cysteine 91, and cysteine 55–cysteine 66.

Monomer. Homodimer. Hexamer; formed during insertion in the membrane.

It is found in the cytoplasmic granule. Forms pores in the cell membrane of host cells. Implicated in the cytolytic activity of the parasite. Pore forming activity is lower compared to the activity of ameobapore A from the pathogenic strain HM-1:IMSS. This Entamoeba histolytica protein is Non-pathogenic pore-forming peptide amoebapore A.